We begin with the raw amino-acid sequence, 246 residues long: Ubiquinone biosynthesis O-methyltransferase (246 aa).

S-adenosyl-L-methionine is bound by residues arginine 44, glycine 63, aspartate 84, and methionine 128.

Belongs to the methyltransferase superfamily. UbiG/COQ3 family.

It carries out the reaction a 3-demethylubiquinol + S-adenosyl-L-methionine = a ubiquinol + S-adenosyl-L-homocysteine + H(+). The enzyme catalyses a 3-(all-trans-polyprenyl)benzene-1,2-diol + S-adenosyl-L-methionine = a 2-methoxy-6-(all-trans-polyprenyl)phenol + S-adenosyl-L-homocysteine + H(+). The protein operates within cofactor biosynthesis; ubiquinone biosynthesis. O-methyltransferase that catalyzes the 2 O-methylation steps in the ubiquinone biosynthetic pathway. This is Ubiquinone biosynthesis O-methyltransferase from Xylella fastidiosa (strain 9a5c).